Reading from the N-terminus, the 396-residue chain is NADH-quinone oxidoreductase subunit D (396 aa).

The protein belongs to the complex I 49 kDa subunit family. As to quaternary structure, NDH-1 is composed of 14 different subunits. Subunits NuoB, C, D, E, F, and G constitute the peripheral sector of the complex.

Its subcellular location is the cell inner membrane. The enzyme catalyses a quinone + NADH + 5 H(+)(in) = a quinol + NAD(+) + 4 H(+)(out). Functionally, NDH-1 shuttles electrons from NADH, via FMN and iron-sulfur (Fe-S) centers, to quinones in the respiratory chain. The immediate electron acceptor for the enzyme in this species is believed to be ubiquinone. Couples the redox reaction to proton translocation (for every two electrons transferred, four hydrogen ions are translocated across the cytoplasmic membrane), and thus conserves the redox energy in a proton gradient. In Chelativorans sp. (strain BNC1), this protein is NADH-quinone oxidoreductase subunit D.